We begin with the raw amino-acid sequence, 171 residues long: Neuronal vesicle trafficking-associated protein 2 (171 aa).

The interval 1–21 is disordered; sequence MVKLNGNPGEKGAKPPSVEDG. The Cytoplasmic segment spans residues 1-71; sequence MVKLNGNPGE…FRVPKIAEFT (71 aa). Residues 72–92 form a helical; Signal-anchor for type II membrane protein membrane-spanning segment; it reads VTILVSLALAFLACIVFLVVY. The Lumenal portion of the chain corresponds to 93–171; that stretch reads KAFTYDHSCP…EPKPPKTQGH (79 aa).

This sequence belongs to the NSG family.

It is found in the membrane. Its subcellular location is the golgi apparatus. The protein localises to the trans-Golgi network membrane. It localises to the cell projection. The protein resides in the dendrite. It is found in the endosome membrane. Its subcellular location is the early endosome membrane. The protein localises to the late endosome membrane. It localises to the lysosome lumen. The protein resides in the cytoplasmic vesicle membrane. It is found in the golgi stack membrane. Its subcellular location is the endosome. The protein localises to the multivesicular body membrane. The polypeptide is Neuronal vesicle trafficking-associated protein 2 (Rattus norvegicus (Rat)).